Here is a 478-residue protein sequence, read N- to C-terminus: Abscisate beta-glucosyltransferase (478 aa).

The active-site Proton acceptor is His20. His20 serves as a coordination point for an anthocyanidin. Asp108 acts as the Charge relay in catalysis. The UDP-alpha-D-glucose site is built by Ala340, Gln342, His357, Trp360, Asn361, Ser362, and Glu365. Ala380 contributes to the an anthocyanidin binding site. UDP-alpha-D-glucose contacts are provided by Glu381 and Gln382.

This sequence belongs to the UDP-glycosyltransferase family.

The enzyme catalyses 2-cis-(+)-abscisate + UDP-alpha-D-glucose = beta-D-glucopyranosyl cis-(+)-abscisate + UDP. Its function is as follows. Glucosyltransferase involved in the catabolism of abscisic acid (ABA). Adds a glucosyl group at the C-1 position of ABA; (S)-2-trans-abscisate is a better substrate than the natural (+)-S-abscisate or its enantiomer (-)-R-abscisate. No activity with (-)-phaseic acid (PA), methylated-ABA or with other hormones such as jasmonate, zeatin, auxin (IAA) or gibberellin A3 (GA3). The protein is Abscisate beta-glucosyltransferase (AOG) of Phaseolus angularis (Azuki bean).